The chain runs to 467 residues: Light-independent protochlorophyllide reductase subunit N (467 aa).

[4Fe-4S] cluster is bound by residues cysteine 22, cysteine 47, and cysteine 107.

The protein belongs to the BchN/ChlN family. In terms of assembly, protochlorophyllide reductase is composed of three subunits; ChlL, ChlN and ChlB. Forms a heterotetramer of two ChlB and two ChlN subunits. The cofactor is [4Fe-4S] cluster.

It is found in the plastid. The protein resides in the chloroplast. It carries out the reaction chlorophyllide a + oxidized 2[4Fe-4S]-[ferredoxin] + 2 ADP + 2 phosphate = protochlorophyllide a + reduced 2[4Fe-4S]-[ferredoxin] + 2 ATP + 2 H2O. Its pathway is porphyrin-containing compound metabolism; chlorophyll biosynthesis (light-independent). Component of the dark-operative protochlorophyllide reductase (DPOR) that uses Mg-ATP and reduced ferredoxin to reduce ring D of protochlorophyllide (Pchlide) to form chlorophyllide a (Chlide). This reaction is light-independent. The NB-protein (ChlN-ChlB) is the catalytic component of the complex. This is Light-independent protochlorophyllide reductase subunit N from Chara vulgaris (Common stonewort).